We begin with the raw amino-acid sequence, 303 residues long: N-acetyl-D-glucosamine kinase (303 aa).

ATP-binding positions include glycine 4–lysine 11 and glycine 133–leucine 140. 4 residues coordinate Zn(2+): histidine 157, cysteine 177, cysteine 179, and cysteine 184.

It belongs to the ROK (NagC/XylR) family. NagK subfamily.

It catalyses the reaction N-acetyl-D-glucosamine + ATP = N-acetyl-D-glucosamine 6-phosphate + ADP + H(+). The protein operates within cell wall biogenesis; peptidoglycan recycling. Functionally, catalyzes the phosphorylation of N-acetyl-D-glucosamine (GlcNAc) derived from cell-wall degradation, yielding GlcNAc-6-P. In Salmonella dublin (strain CT_02021853), this protein is N-acetyl-D-glucosamine kinase.